A 415-amino-acid chain; its full sequence is von Willebrand factor A domain-containing protein 1 (415 aa).

The N-terminal stretch at 1–18 is a signal peptide; it reads MLFWTVLSMALSLRLALA. The region spanning 34–213 is the VWFA domain; the sequence is DLLFLLDSSA…ELRGAIIDAM (180 aa). Residues S74, S80, and S93 each carry the phosphoserine modification. Fibronectin type-III domains lie at 214–305 and 307–405; these read QPHQ…LQEE and GPER…VPQA. The N-linked (GlcNAc...) asparagine glycan is linked to N264. A disulfide bond links C369 and C393.

In terms of assembly, homodimer or homomultimer; disulfide-linked. Interacts with HSPG2. N-glycosylated.

Its subcellular location is the secreted. The protein resides in the extracellular space. The protein localises to the extracellular matrix. It localises to the basement membrane. Its function is as follows. Promotes matrix assembly. Involved in the organization of skeletal muscles and in the formation of neuromuscular junctions. The chain is von Willebrand factor A domain-containing protein 1 (Vwa1) from Rattus norvegicus (Rat).